The primary structure comprises 121 residues: UPF0102 protein BVU_1879 (121 aa).

It belongs to the UPF0102 family.

In Phocaeicola vulgatus (strain ATCC 8482 / DSM 1447 / JCM 5826 / CCUG 4940 / NBRC 14291 / NCTC 11154) (Bacteroides vulgatus), this protein is UPF0102 protein BVU_1879.